A 1319-amino-acid polypeptide reads, in one-letter code: DNA (cytosine-5)-methyltransferase CMT2 (1319 aa).

Positions 1 to 15 (METPPPDPVSPPPPA) are enriched in pro residues. Disordered regions lie at residues 1–34 (METPPPDPVSPPPPAADEGSPGGDDGAEDAGGFS), 142–189 (ALDS…VASS), 265–302 (SAASSMPLNQNGDSSRASKRRVADSRKSRSSEGSKLPA), and 442–468 (KSRVVSKTPQGRGRRSPQPPKTQRART). A compositionally biased stretch (polar residues) spans 266 to 279 (AASSMPLNQNGDSS). Over residues 285–296 (RVADSRKSRSSE) the composition is skewed to basic and acidic residues. The 118-residue stretch at 602-719 (YTFCIGECAF…IDYSTFSTIE (118 aa)) folds into the BAH domain. The 539-residue stretch at 758–1296 (LSLLDLYCGC…YALAMAYLKK (539 aa)) folds into the SAM-dependent MTase C5-type domain. The Chromo domain occupies 863 to 928 (FEVWKLVDIC…EGHRQRILPR (66 aa)). Cys941 is an active-site residue.

It is found in the nucleus. It catalyses the reaction a 2'-deoxycytidine in DNA + S-adenosyl-L-methionine = a 5-methyl-2'-deoxycytidine in DNA + S-adenosyl-L-homocysteine + H(+). In terms of biological role, involved in CpXpG DNA methylation. This chain is DNA (cytosine-5)-methyltransferase CMT2, found in Oryza sativa subsp. japonica (Rice).